Consider the following 439-residue polypeptide: Xylose isomerase (439 aa).

Residues histidine 101 and aspartate 104 contribute to the active site. Mg(2+) is bound by residues glutamate 232, glutamate 268, histidine 271, aspartate 296, aspartate 307, aspartate 309, and aspartate 339.

This sequence belongs to the xylose isomerase family. In terms of assembly, homotetramer. Requires Mg(2+) as cofactor.

The protein localises to the cytoplasm. The enzyme catalyses alpha-D-xylose = alpha-D-xylulofuranose. This chain is Xylose isomerase, found in Yersinia pestis bv. Antiqua (strain Angola).